A 173-amino-acid chain; its full sequence is Cytidylate kinase (173 aa).

An ATP-binding site is contributed by 7–15; sequence GLAGTGTST.

The protein belongs to the cytidylate kinase family. Type 2 subfamily.

The protein localises to the cytoplasm. It carries out the reaction CMP + ATP = CDP + ADP. It catalyses the reaction dCMP + ATP = dCDP + ADP. This is Cytidylate kinase from Methanosphaera stadtmanae (strain ATCC 43021 / DSM 3091 / JCM 11832 / MCB-3).